The chain runs to 359 residues: Protein LpfD (359 aa).

Residues M1–A24 form the signal peptide.

The protein belongs to the fimbrial protein family.

Its subcellular location is the fimbrium. This chain is Protein LpfD (lpfD), found in Salmonella typhimurium (strain LT2 / SGSC1412 / ATCC 700720).